Reading from the N-terminus, the 295-residue chain is Glycine--tRNA ligase alpha subunit (295 aa).

Belongs to the class-II aminoacyl-tRNA synthetase family. Tetramer of two alpha and two beta subunits.

The protein localises to the cytoplasm. It carries out the reaction tRNA(Gly) + glycine + ATP = glycyl-tRNA(Gly) + AMP + diphosphate. This is Glycine--tRNA ligase alpha subunit (glyQ) from Bacillus subtilis (strain 168).